The chain runs to 238 residues: Probable transcriptional regulatory protein Sde_1551 (238 aa).

The protein belongs to the TACO1 family.

It localises to the cytoplasm. The sequence is that of Probable transcriptional regulatory protein Sde_1551 from Saccharophagus degradans (strain 2-40 / ATCC 43961 / DSM 17024).